The sequence spans 229 residues: Putative germin-like protein 3-4 (229 aa).

The N-terminal stretch at 1–31 (MEHSFKTITAGVVFVVLLLQQAPVLIRATDA) is a signal peptide. An intrachain disulfide couples Cys-38 to Cys-53. Positions 67 to 219 (SKIATGGDVN…ALRVDTGVVE (153 aa)) constitute a Cupin type-1 domain. N-linked (GlcNAc...) asparagine glycosylation is found at Asn-80 and Asn-83. The Mn(2+) site is built by His-116, His-118, Glu-123, and His-165.

It belongs to the germin family. As to quaternary structure, oligomer (believed to be a pentamer but probably hexamer).

The protein resides in the secreted. It is found in the extracellular space. It localises to the apoplast. In terms of biological role, may play a role in plant defense. Probably has no oxalate oxidase activity even if the active site is conserved. The chain is Putative germin-like protein 3-4 from Oryza sativa subsp. japonica (Rice).